Reading from the N-terminus, the 748-residue chain is 5-methyltetrahydropteroyltriglutamate--homocysteine methyltransferase (748 aa).

Lys-111 contributes to the 5-methyltetrahydropteroyltri-L-glutamate binding site. Residues 428-430 and Glu-478 each bind L-homocysteine; that span reads IGS. Residues 428–430 and Glu-478 contribute to the L-methionine site; that span reads IGS. 5-methyltetrahydropteroyltri-L-glutamate is bound by residues 509–510 and Trp-555; that span reads RC. Asp-593 lines the L-homocysteine pocket. Asp-593 provides a ligand contact to L-methionine. Glu-599 is a binding site for 5-methyltetrahydropteroyltri-L-glutamate. 3 residues coordinate Zn(2+): His-635, Cys-637, and Glu-659. The active-site Proton donor is the His-687. Cys-719 is a binding site for Zn(2+).

The protein belongs to the vitamin-B12 independent methionine synthase family. It depends on Zn(2+) as a cofactor.

The catalysed reaction is 5-methyltetrahydropteroyltri-L-glutamate + L-homocysteine = tetrahydropteroyltri-L-glutamate + L-methionine. It functions in the pathway amino-acid biosynthesis; L-methionine biosynthesis via de novo pathway; L-methionine from L-homocysteine (MetE route): step 1/1. Its function is as follows. Catalyzes the transfer of a methyl group from 5-methyltetrahydrofolate to homocysteine resulting in methionine formation. The polypeptide is 5-methyltetrahydropteroyltriglutamate--homocysteine methyltransferase (Herpetosiphon aurantiacus (strain ATCC 23779 / DSM 785 / 114-95)).